Reading from the N-terminus, the 166-residue chain is Salivary acidic proline-rich phosphoprotein 1/2 (166 aa).

An N-terminal signal peptide occupies residues 1–16 (MLLILLSVALLAFSSA). The disordered stretch occupies residues 16–166 (AQDLDEDVSQ…QGPPQGQSPQ (151 aa)). At Q17 the chain carries Pyrrolidone carboxylic acid. An inhibits hydroxyapatite formation, binds to hydroxyapatite and calcium region spans residues 17–46 (QDLDEDVSQEDVPLVISDGGDSEQFIDEER). At S24 the chain carries Phosphoserine; by FAM20C. S33 bears the Phosphoserine; alternate mark. O-linked (GlcA) serine; alternate glycosylation is found at S33 and S38. At S38 the chain carries Phosphoserine; by FAM20C; alternate. Composition is skewed to low complexity over residues 48–61 (GPPL…PSAG) and 68–82 (GPQQ…QQQQ). 2 stretches are compositionally biased toward pro residues: residues 83–111 (GPPP…PQGP) and 137–159 (GPPP…PQGP).

Proteolytically cleaved; PRP-2, PRP-1, PIF-S and Db-S yield PRP-4, PRP-3 (protein A), PIF-F and Db-F, respectively. In terms of processing, a hexuronic acid was shown to be linked to Ser-33 in about 40% of the polypeptides. Neither the structure of the carbohydrate (whether glucuronic acid or an isomer of), nor the linkage (whether a glycoside or an ester) has been definitely established.

It is found in the secreted. PRP's act as highly potent inhibitors of crystal growth of calcium phosphates. They provide a protective and reparative environment for dental enamel which is important for the integrity of the teeth. The sequence is that of Salivary acidic proline-rich phosphoprotein 1/2 (PRH1) from Homo sapiens (Human).